Here is a 469-residue protein sequence, read N- to C-terminus: RuvB-like helicase 2 (469 aa).

Residue 73 to 80 (GEPGTGKT) participates in ATP binding.

It belongs to the RuvB family. Forms homohexameric rings. May form a dodecamer with rvb1 made of two stacked hexameric rings. Component of the chromatin remodeling Ino80 complex. Component of the RNA polymerase II holoenzyme complex.

Its subcellular location is the nucleus. It carries out the reaction ATP + H2O = ADP + phosphate + H(+). Has double-stranded DNA-stimulated ATPase and ATP-dependent DNA helicase (5' to 3') activity suggesting a role in nuclear processes such as recombination and transcription. In terms of biological role, proposed core component of the chromatin remodeling Ino80 complex which is involved in transcriptional regulation, DNA replication and probably DNA repair. This chain is RuvB-like helicase 2 (rvb2), found in Dictyostelium discoideum (Social amoeba).